We begin with the raw amino-acid sequence, 409 residues long: O-methyltransferase pyiA (409 aa).

Over residues M1 to P21 the composition is skewed to polar residues. The interval M1 to E46 is disordered. D271 contacts S-adenosyl-L-methionine. H317 functions as the Proton acceptor in the catalytic mechanism.

The protein belongs to the class I-like SAM-binding methyltransferase superfamily. Cation-independent O-methyltransferase family.

The protein operates within mycotoxin biosynthesis. O-methyltransferase; part of the gene cluster that mediates the biosynthesis of the mycotoxin pyrichalasin H, a tyrosine-derived cytochalasan that inhibits the growth of rice seedlings, but also inhibits lymphocyte capping and actin polymerization and alters cell morphology. Pyrichalasin H is indicated as the responsible agent for the genus-specific pathogenicity of M.grisea toward crabgrass. The first step in the pathway is catalyzed by the O-methyltransferase pyiA which methylates free tyrosine to generate the precursor O-methyltyrosine. The hybrid PKS-NRPS pyiS, assisted by the enoyl reductase pyiC, are responsible for fusion of the O-methyltyrosine precursor and the polyketide backbone. The polyketide synthase module (PKS) of pyiS is responsible for the synthesis of the polyketide backbone and the downstream nonribosomal peptide synthetase (NRPS) amidates the carboxyl end of the polyketide with the O-methyltyrosine precursor. As the NRPS A-domain demonstrates substrate tolerance, pyiS can also use phenylalanine, tyrosine and even para-chlorophenylalanine as amino acid precursor, which leads to the production of novel cytochalasans, including halogenated cytochalasans. Because pyiS lacks a designated enoylreductase (ER) domain, the required activity is provided the enoyl reductase pyiC. Reduction by the hydrolyase pyiE leads to 1,5-dihydropyrrolone, which is substrate for dehydration and intra-molecular Diels-Alder cyclization by the Diels-Alderase pyiF to yield the required isoindolone-fused macrocycle. The tailoring cytochrome P450 monooxygenases piyD and piyG catalyze the hydroxylation at C-18 and C-7, respectivily, whereas the short-chain dehydrogenase/reductase pyiH reduces the carbonyl at C-21 in preparation for the transfer of an acetyl group by the acetyltransferase pyiB. These 3 reactions whose order is not clear yet, lead to the production of O-methylpyrichalasin J, a deacetylated pyrichalasin H. Finally, pyiB to converts O-methylpyrichalasin J into the final product pyrichalasin H via acetylation of C-21. The polypeptide is O-methyltransferase pyiA (Pyricularia grisea (Crabgrass-specific blast fungus)).